Consider the following 398-residue polypeptide: Ribosomal RNA small subunit methyltransferase B (398 aa).

Residues 221–227, Asp242, Asp268, and Asp283 contribute to the S-adenosyl-L-methionine site; that span reads CGGAGLK. Residue Cys336 is the Nucleophile of the active site.

Belongs to the class I-like SAM-binding methyltransferase superfamily. RsmB/NOP family.

The protein resides in the cytoplasm. It catalyses the reaction cytidine(967) in 16S rRNA + S-adenosyl-L-methionine = 5-methylcytidine(967) in 16S rRNA + S-adenosyl-L-homocysteine + H(+). Functionally, specifically methylates the cytosine at position 967 (m5C967) of 16S rRNA. The protein is Ribosomal RNA small subunit methyltransferase B of Thermus thermophilus (strain ATCC 27634 / DSM 579 / HB8).